Reading from the N-terminus, the 110-residue chain is Large ribosomal subunit protein uL22 (110 aa).

Belongs to the universal ribosomal protein uL22 family. Part of the 50S ribosomal subunit.

This protein binds specifically to 23S rRNA; its binding is stimulated by other ribosomal proteins, e.g. L4, L17, and L20. It is important during the early stages of 50S assembly. It makes multiple contacts with different domains of the 23S rRNA in the assembled 50S subunit and ribosome. In terms of biological role, the globular domain of the protein is located near the polypeptide exit tunnel on the outside of the subunit, while an extended beta-hairpin is found that lines the wall of the exit tunnel in the center of the 70S ribosome. This chain is Large ribosomal subunit protein uL22, found in Glaesserella parasuis serovar 5 (strain SH0165) (Haemophilus parasuis).